We begin with the raw amino-acid sequence, 466 residues long: Coagulation factor VII (466 aa).

A signal peptide spans 1–20; it reads MVSQALRLLCLLLGLQGCLA. Residues 21–60 constitute a propeptide that is removed on maturation; the sequence is AGGVAEASGGETRDXXWKPGPHRVFITQEEAHGVLHRRRR. The Gla domain occupies 61 to 105; the sequence is ANAFLEELRPGSLERECKEEQCSFEEAREIFKDLERTKLFWISYS. Glu-66, Glu-67, Glu-74, Glu-76, Glu-79, Glu-80, Glu-85, Glu-86, Glu-89, and Glu-95 each carry 4-carboxyglutamate. A disulfide bridge connects residues Cys-77 and Cys-82. Positions 106-142 constitute an EGF-like 1; calcium-binding domain; it reads DGDQCASSPCQNGGSCKDQLQSYICFCLPAFEGRNCE. 10 cysteine pairs are disulfide-bonded: Cys-110–Cys-121, Cys-115–Cys-130, Cys-132–Cys-141, Cys-151–Cys-162, Cys-158–Cys-172, Cys-174–Cys-187, Cys-195–Cys-322, Cys-219–Cys-224, Cys-238–Cys-254, and Cys-370–Cys-389. Ser-112 is a glycosylation site (O-linked (Glc...) serine; alternate). Ser-112 is a glycosylation site (O-linked (Xyl...) serine; alternate). Ser-120 carries O-linked (Fuc) serine glycosylation. The residue at position 123 (Asp-123) is a (3R)-3-hydroxyaspartate. In terms of domain architecture, EGF-like 2 spans 147–188; the sequence is DQLICVNENGGCEQYCSDHTGTKRSCRCHEGYSLLADGVSCT. Residue Asn-205 is glycosylated (N-linked (GlcNAc...) asparagine). Residues 213–452 enclose the Peptidase S1 domain; it reads IVGGKVCPKG…YIEWLQKLMR (240 aa). Residues His-253 and Asp-302 each act as charge relay system in the active site. N-linked (GlcNAc...) asparagine glycosylation is present at Asn-382. Asp-398 provides a ligand contact to substrate. Cys-400 and Cys-428 are oxidised to a cystine. Ser-404 serves as the catalytic Charge relay system.

This sequence belongs to the peptidase S1 family. As to quaternary structure, heterodimer of a light chain and a heavy chain linked by a disulfide bond. In terms of processing, the vitamin K-dependent, enzymatic carboxylation of some glutamate residues allows the modified protein to bind calcium. The iron and 2-oxoglutarate dependent 3-hydroxylation of aspartate and asparagine is (R) stereospecific within EGF domains. Post-translationally, O-glycosylated. O-fucosylated by POFUT1 on a conserved serine or threonine residue found in the consensus sequence C2-X(4,5)-[S/T]-C3 of EGF domains, where C2 and C3 are the second and third conserved cysteines. In terms of processing, can be either O-glucosylated or O-xylosylated at Ser-112 by POGLUT1.

It localises to the secreted. It catalyses the reaction Selective cleavage of Arg-|-Ile bond in factor X to form factor Xa.. Its function is as follows. Initiates the extrinsic pathway of blood coagulation. Serine protease that circulates in the blood in a zymogen form. Factor VII is converted to factor VIIa by factor Xa, factor XIIa, factor IXa, or thrombin by minor proteolysis. In the presence of tissue factor and calcium ions, factor VIIa then converts factor X to factor Xa by limited proteolysis. Factor VIIa also converts factor IX to factor IXa in the presence of tissue factor and calcium. The sequence is that of Coagulation factor VII (F7) from Pan troglodytes (Chimpanzee).